The sequence spans 834 residues: Protein ROOT HAIR DEFECTIVE 3 homolog 2 (834 aa).

Over 1–683 the chain is Cytoplasmic; that stretch reads MGENDDGCST…EAHKRNNNWL (683 aa). The GB1/RHD3-type G domain maps to 37 to 252; sequence GLSYAVVAIM…ISPGGLAGDR (216 aa). 47 to 54 is a binding site for GTP; sequence GPQSSGKS. Residues 214-241 adopt a coiled-coil conformation; that stretch reads MIVALSSYEEKEKQFEQEVAELRQRFFH. Residues 684-704 form a helical membrane-spanning segment; that stretch reads PPAWAIVLMIVLGFNEFMMLL. Over 705 to 707 the chain is Lumenal; the sequence is KNP. The chain crosses the membrane as a helical span at residues 708 to 728; it reads LYLLGFFVAFLLSKALWVQLD. Topologically, residues 729–834 are cytoplasmic; it reads IPREFQHGAV…NVQESEISQM (106 aa). The span at 767–783 shows a compositional bias: polar residues; that stretch reads TTQEVPDLSASQTYRQQ. The tract at residues 767–834 is disordered; the sequence is TTQEVPDLSA…NVQESEISQM (68 aa). Residues 784-803 are compositionally biased toward low complexity; the sequence is SPSHSISSTISESVASNISS. Residues 823 to 834 show a composition bias toward polar residues; sequence TNNVQESEISQM.

This sequence belongs to the TRAFAC class dynamin-like GTPase superfamily. GB1/RHD3 GTPase family. RHD3 subfamily. Expressed in roots, leaves, stems and flowers.

It localises to the endoplasmic reticulum membrane. Functionally, probable GTP-binding protein that may be involved in cell development. The protein is Protein ROOT HAIR DEFECTIVE 3 homolog 2 of Arabidopsis thaliana (Mouse-ear cress).